A 455-amino-acid polypeptide reads, in one-letter code: Bifunctional protein GlmU (455 aa).

The tract at residues 1–225 (MNIVILAAGM…EWETLGVNSK (225 aa)) is pyrophosphorylase. UDP-N-acetyl-alpha-D-glucosamine-binding positions include 6 to 9 (LAAG), K20, Q71, 76 to 77 (GT), 98 to 100 (YGD), G135, E150, N165, and N223. D100 is a binding site for Mg(2+). N223 is a Mg(2+) binding site. Positions 226 to 246 (VQLAELERIHQRNLAQQLLED) are linker. Residues 247–455 (GVTLIDPARI…QRPVKQKKEG (209 aa)) form an N-acetyltransferase region. R329 and K347 together coordinate UDP-N-acetyl-alpha-D-glucosamine. Residue H359 is the Proton acceptor of the active site. Residues Y362 and N373 each coordinate UDP-N-acetyl-alpha-D-glucosamine. Residues A376, 382–383 (NY), S401, A419, and R436 contribute to the acetyl-CoA site.

In the N-terminal section; belongs to the N-acetylglucosamine-1-phosphate uridyltransferase family. This sequence in the C-terminal section; belongs to the transferase hexapeptide repeat family. As to quaternary structure, homotrimer. Requires Mg(2+) as cofactor.

It is found in the cytoplasm. The catalysed reaction is alpha-D-glucosamine 1-phosphate + acetyl-CoA = N-acetyl-alpha-D-glucosamine 1-phosphate + CoA + H(+). It carries out the reaction N-acetyl-alpha-D-glucosamine 1-phosphate + UTP + H(+) = UDP-N-acetyl-alpha-D-glucosamine + diphosphate. The protein operates within nucleotide-sugar biosynthesis; UDP-N-acetyl-alpha-D-glucosamine biosynthesis; N-acetyl-alpha-D-glucosamine 1-phosphate from alpha-D-glucosamine 6-phosphate (route II): step 2/2. Its pathway is nucleotide-sugar biosynthesis; UDP-N-acetyl-alpha-D-glucosamine biosynthesis; UDP-N-acetyl-alpha-D-glucosamine from N-acetyl-alpha-D-glucosamine 1-phosphate: step 1/1. It functions in the pathway bacterial outer membrane biogenesis; LPS lipid A biosynthesis. In terms of biological role, catalyzes the last two sequential reactions in the de novo biosynthetic pathway for UDP-N-acetylglucosamine (UDP-GlcNAc). The C-terminal domain catalyzes the transfer of acetyl group from acetyl coenzyme A to glucosamine-1-phosphate (GlcN-1-P) to produce N-acetylglucosamine-1-phosphate (GlcNAc-1-P), which is converted into UDP-GlcNAc by the transfer of uridine 5-monophosphate (from uridine 5-triphosphate), a reaction catalyzed by the N-terminal domain. This Ralstonia pickettii (strain 12J) protein is Bifunctional protein GlmU.